Here is a 361-residue protein sequence, read N- to C-terminus: Homocitrate synthase (361 aa).

The Pyruvate carboxyltransferase domain occupies 1-251 (MVLDSTLREG…KYRLDLLYRV (251 aa)). Arginine 8 serves as a coordination point for 2-oxoglutarate. Glutamate 9 lines the Mg(2+) pocket. Histidine 68, arginine 128, and threonine 162 together coordinate 2-oxoglutarate. Mg(2+) contacts are provided by histidine 188 and histidine 190. The active-site Proton acceptor is the histidine 282.

Belongs to the alpha-IPM synthase/homocitrate synthase family. Homocitrate synthase LYS20/LYS21 subfamily. It depends on Mg(2+) as a cofactor. Mn(2+) serves as cofactor.

The catalysed reaction is acetyl-CoA + 2-oxoglutarate + H2O = (2R)-homocitrate + CoA + H(+). It participates in amino-acid biosynthesis; L-lysine biosynthesis via AAA pathway; L-alpha-aminoadipate from 2-oxoglutarate: step 1/5. In terms of biological role, catalyzes the aldol-type condensation of 2-oxoglutarate with acetyl-CoA to yield homocitrate. Carries out the first step of the alpha-aminoadipate (AAA) lysine biosynthesis pathway. The polypeptide is Homocitrate synthase (Pyrococcus abyssi (strain GE5 / Orsay)).